Here is a 350-residue protein sequence, read N- to C-terminus: Phenylalanine--tRNA ligase alpha subunit (350 aa).

A Mg(2+)-binding site is contributed by Glu-260.

Belongs to the class-II aminoacyl-tRNA synthetase family. Phe-tRNA synthetase alpha subunit type 1 subfamily. Tetramer of two alpha and two beta subunits. It depends on Mg(2+) as a cofactor.

It localises to the cytoplasm. The catalysed reaction is tRNA(Phe) + L-phenylalanine + ATP = L-phenylalanyl-tRNA(Phe) + AMP + diphosphate + H(+). The protein is Phenylalanine--tRNA ligase alpha subunit of Mesoplasma florum (strain ATCC 33453 / NBRC 100688 / NCTC 11704 / L1) (Acholeplasma florum).